Here is a 371-residue protein sequence, read N- to C-terminus: S-adenosylmethionine:tRNA ribosyltransferase-isomerase (371 aa).

Belongs to the QueA family. Monomer.

It is found in the cytoplasm. The catalysed reaction is 7-aminomethyl-7-carbaguanosine(34) in tRNA + S-adenosyl-L-methionine = epoxyqueuosine(34) in tRNA + adenine + L-methionine + 2 H(+). It functions in the pathway tRNA modification; tRNA-queuosine biosynthesis. Its function is as follows. Transfers and isomerizes the ribose moiety from AdoMet to the 7-aminomethyl group of 7-deazaguanine (preQ1-tRNA) to give epoxyqueuosine (oQ-tRNA). The polypeptide is S-adenosylmethionine:tRNA ribosyltransferase-isomerase (Nitratidesulfovibrio vulgaris (strain DP4) (Desulfovibrio vulgaris)).